The sequence spans 135 residues: ATP synthase epsilon chain (135 aa).

This sequence belongs to the ATPase epsilon chain family. In terms of assembly, F-type ATPases have 2 components, CF(1) - the catalytic core - and CF(0) - the membrane proton channel. CF(1) has five subunits: alpha(3), beta(3), gamma(1), delta(1), epsilon(1). CF(0) has three main subunits: a, b and c.

It localises to the cell inner membrane. Produces ATP from ADP in the presence of a proton gradient across the membrane. This is ATP synthase epsilon chain from Hyphomonas neptunium (strain ATCC 15444).